Consider the following 92-residue polypeptide: UPF0473 protein BC_4380 (92 aa).

The protein belongs to the UPF0473 family.

The sequence is that of UPF0473 protein BC_4380 from Bacillus cereus (strain ATCC 14579 / DSM 31 / CCUG 7414 / JCM 2152 / NBRC 15305 / NCIMB 9373 / NCTC 2599 / NRRL B-3711).